Reading from the N-terminus, the 834-residue chain is Ras GTPase-activating protein 3 (834 aa).

C2 domains follow at residues 1-112 and 123-263; these read MAVE…DTWF and VQGK…EAWY. A2 bears the N-acetylalanine mark. A Phosphotyrosine modification is found at Y66. Position 77 is a phosphoserine (S77). T110 carries the post-translational modification Phosphothreonine. The Ras-GAP domain maps to 346–561; sequence GRVVPFISAI…DAVKNFLDLI (216 aa). One can recognise a PH domain in the interval 576–677; sequence ILLKEGFMIK…WIDILTKVSQ (102 aa). The Btk-type zinc-finger motif lies at 679-715; it reads NQKRLAVYHPSAYLNGHWLCCRASSDTAAGCSPCTGG. Residues H687, C698, C699, and C709 each coordinate Zn(2+). The tract at residues 806 to 834 is disordered; the sequence is KYGSQEHPIGDKSFQSYIRQQSETPAHSM. Phosphoserine occurs at positions 809 and 833. Positions 818–834 are enriched in polar residues; that stretch reads SFQSYIRQQSETPAHSM.

In terms of biological role, inhibitory regulator of the Ras-cyclic AMP pathway. May bind inositol tetrakisphosphate (IP4). In Bos taurus (Bovine), this protein is Ras GTPase-activating protein 3 (RASA3).